The chain runs to 103 residues: Nucleoid-associated protein A2cp1_3777 (103 aa).

Belongs to the YbaB/EbfC family. Homodimer.

Its subcellular location is the cytoplasm. It localises to the nucleoid. Its function is as follows. Binds to DNA and alters its conformation. May be involved in regulation of gene expression, nucleoid organization and DNA protection. The sequence is that of Nucleoid-associated protein A2cp1_3777 from Anaeromyxobacter dehalogenans (strain 2CP-1 / ATCC BAA-258).